Reading from the N-terminus, the 376-residue chain is 12-oxophytodienoate reductase 1 (376 aa).

FMN is bound by residues 35 to 37 (PLT), alanine 68, and glutamine 110. Substrate contacts are provided by residues serine 143 and 187–190 (HGAH). The active-site Proton donor is tyrosine 192. An FMN-binding site is contributed by arginine 239. Arginine 279 is a binding site for substrate. FMN is bound by residues glycine 309 and 330–331 (GR).

Belongs to the NADH:flavin oxidoreductase/NADH oxidase family. Requires FMN as cofactor. Constitutively expressed in roots, leaves, cotyledons, cells culture and to a lower extent in flowers.

The protein resides in the cytoplasm. The catalysed reaction is (1S,2S)-OPC-8 + NADP(+) = (9S,13S,15Z)-12-oxophyto-10,15-dienoate + NADPH + H(+). Its pathway is lipid metabolism; oxylipin biosynthesis. Its function is as follows. Specifically cleaves olefinic bonds in alpha,beta-unsaturated carbonyls and may be involved in detoxification or modification of these reactive compounds. May be involved in the biosynthesis or metabolism of oxylipin signaling molecules. In vitro, reduces 9R,13R-12-oxophyodienoic acid (9R,13R-OPDA) to 9R,13R-OPC-8:0, but not 9S,13S-OPDA, the natural precursor of jasmonic acid. Also reduces N-ethylmaleimide and maleic acid. The polypeptide is 12-oxophytodienoate reductase 1 (OPR1) (Solanum lycopersicum (Tomato)).